Consider the following 133-residue polypeptide: Small ribosomal subunit protein uS8 (133 aa).

Belongs to the universal ribosomal protein uS8 family. As to quaternary structure, part of the 30S ribosomal subunit. Contacts proteins S5 and S12.

In terms of biological role, one of the primary rRNA binding proteins, it binds directly to 16S rRNA central domain where it helps coordinate assembly of the platform of the 30S subunit. The sequence is that of Small ribosomal subunit protein uS8 from Acaryochloris marina (strain MBIC 11017).